The sequence spans 274 residues: Thiamine kinase (274 aa).

Belongs to the thiamine kinase family.

The enzyme catalyses thiamine + ATP = thiamine phosphate + ADP + H(+). The protein operates within cofactor biosynthesis; thiamine diphosphate biosynthesis; thiamine phosphate from thiamine: step 1/1. Functionally, catalyzes the ATP-dependent phosphorylation of thiamine to thiamine phosphate. Is involved in thiamine salvage. The polypeptide is Thiamine kinase (Salmonella choleraesuis (strain SC-B67)).